The chain runs to 248 residues: Myelin protein P0 (248 aa).

The N-terminal stretch at 1-29 is a signal peptide; that stretch reads MAPGAPSSSPSPILAALLFSSLVLSPALA. Residues 30-143 form the Ig-like V-type domain; the sequence is IVVYTDREIY…DIVGKTSQVT (114 aa). At 30–153 the chain is on the extracellular side; it reads IVVYTDREIY…LYVFEKVPTR (124 aa). Cys50 and Cys127 are joined by a disulfide. The N-linked (GlcNAc...) (complex) asparagine glycan is linked to Asn122. The chain crosses the membrane as a helical span at residues 154–179; sequence YGVVLGAVIGGILGVVLLLLLLFYLI. Over 180 to 248 the chain is Cytoplasmic; that stretch reads RYCWLRRQAA…GLGESRKDKK (69 aa). Phosphoserine; by PKC is present on Ser210. The segment at 222-248 is disordered; the sequence is MLDHSRSTKAASEKKSKGLGESRKDKK. Over residues 224-248 the composition is skewed to basic and acidic residues; it reads DHSRSTKAASEKKSKGLGESRKDKK. Residues Ser226 and Ser228 each carry the phosphoserine modification. Ser233 carries the post-translational modification Phosphoserine; by PKC. 2 positions are modified to phosphoserine: Ser237 and Ser243.

It belongs to the myelin P0 protein family. As to quaternary structure, homodimer and homotetramer. Post-translationally, N-glycosylated; contains sulfate-substituted glycan. As to expression, found only in peripheral nervous system Schwann cells.

It localises to the cell membrane. In terms of biological role, is an adhesion molecule necessary for normal myelination in the peripheral nervous system. It mediates adhesion between adjacent myelin wraps and ultimately drives myelin compaction. The protein is Myelin protein P0 (Mpz) of Mus musculus (Mouse).